A 605-amino-acid chain; its full sequence is Isocitrate dehydrogenase kinase/phosphatase (605 aa).

ATP is bound by residues 353–359 (APGFKGT) and Lys-374. The active site involves Asp-413.

Belongs to the AceK family.

Its subcellular location is the cytoplasm. The catalysed reaction is L-seryl-[isocitrate dehydrogenase] + ATP = O-phospho-L-seryl-[isocitrate dehydrogenase] + ADP + H(+). Functionally, bifunctional enzyme which can phosphorylate or dephosphorylate isocitrate dehydrogenase (IDH) on a specific serine residue. This is a regulatory mechanism which enables bacteria to bypass the Krebs cycle via the glyoxylate shunt in response to the source of carbon. When bacteria are grown on glucose, IDH is fully active and unphosphorylated, but when grown on acetate or ethanol, the activity of IDH declines drastically concomitant with its phosphorylation. The sequence is that of Isocitrate dehydrogenase kinase/phosphatase from Rhodopseudomonas palustris (strain HaA2).